The sequence spans 505 residues: Prenylcysteine oxidase 1 (505 aa).

The first 28 residues, 1–28 (MGRFAAALVGSLFWLGLLLCGLGSLASA), serve as a signal peptide directing secretion. N-linked (GlcNAc...) asparagine glycans are attached at residues N196, N323, and N353.

It belongs to the prenylcysteine oxidase family. FAD is required as a cofactor. Highly expressed in the liver, kidney, heart and brain.

Its subcellular location is the lysosome. It carries out the reaction an S-polyprenyl-L-cysteine + O2 + H2O = a polyprenal + L-cysteine + H2O2. The enzyme catalyses S-(2E,6E)-farnesyl-L-cysteine + O2 + H2O = (2E,6E)-farnesal + L-cysteine + H2O2. The catalysed reaction is [(2E,6E,10E)-geranylgeranyl]-L-cysteine + O2 + H2O = (2E,6E,10E)-geranylgeranial + L-cysteine + H2O2. In terms of biological role, prenylcysteine oxidase that cleaves the thioether bond of prenyl-L-cysteines, such as farnesylcysteine and geranylgeranylcysteine. Only active against free prenylcysteines and not prenylcysteine residues within prenylated proteins or peptides. Involved in the final step in the degradation of prenylated proteins, by degrading prenylcysteines after the protein has been degraded. This chain is Prenylcysteine oxidase 1, found in Mus musculus (Mouse).